The primary structure comprises 188 residues: Protein crossbronx-like (188 aa).

The UBC core domain maps to 15–174; that stretch reads KQGYHILAEY…ANQVVKLHCG (160 aa).

The protein belongs to the ubiquitin-conjugating enzyme family. FTS subfamily.

The polypeptide is Protein crossbronx-like (Drosophila simulans (Fruit fly)).